Reading from the N-terminus, the 109-residue chain is Biphenyl dioxygenase system ferredoxin subunit (109 aa).

The region spanning T4–V100 is the Rieske domain. Residues C43, H45, C63, and H66 each contribute to the [2Fe-2S] cluster site.

The protein belongs to the bacterial ring-hydroxylating dioxygenase ferredoxin component family. In terms of assembly, this dioxygenase system consists of four proteins: the two subunits of the hydroxylase component (BphA and BphE), a ferredoxin (BphF) and a ferredoxin reductase (BphG).

Functionally, this protein seems to be a 2Fe-2S ferredoxin. This Paraburkholderia xenovorans (strain LB400) protein is Biphenyl dioxygenase system ferredoxin subunit (bphF).